The chain runs to 192 residues: Probable nicotinate-nucleotide adenylyltransferase (192 aa).

It belongs to the NadD family.

It catalyses the reaction nicotinate beta-D-ribonucleotide + ATP + H(+) = deamido-NAD(+) + diphosphate. Its pathway is cofactor biosynthesis; NAD(+) biosynthesis; deamido-NAD(+) from nicotinate D-ribonucleotide: step 1/1. In terms of biological role, catalyzes the reversible adenylation of nicotinate mononucleotide (NaMN) to nicotinic acid adenine dinucleotide (NaAD). The polypeptide is Probable nicotinate-nucleotide adenylyltransferase (Rhizobium etli (strain CIAT 652)).